We begin with the raw amino-acid sequence, 172 residues long: 3-hydroxydecanoyl-[acyl-carrier-protein] dehydratase (172 aa).

His71 is an active-site residue.

The protein belongs to the thioester dehydratase family. FabA subfamily. In terms of assembly, homodimer.

Its subcellular location is the cytoplasm. It carries out the reaction a (3R)-hydroxyacyl-[ACP] = a (2E)-enoyl-[ACP] + H2O. The enzyme catalyses (3R)-hydroxydecanoyl-[ACP] = (2E)-decenoyl-[ACP] + H2O. The catalysed reaction is (2E)-decenoyl-[ACP] = (3Z)-decenoyl-[ACP]. The protein operates within lipid metabolism; fatty acid biosynthesis. Functionally, necessary for the introduction of cis unsaturation into fatty acids. Catalyzes the dehydration of (3R)-3-hydroxydecanoyl-ACP to E-(2)-decenoyl-ACP and then its isomerization to Z-(3)-decenoyl-ACP. Can catalyze the dehydratase reaction for beta-hydroxyacyl-ACPs with saturated chain lengths up to 16:0, being most active on intermediate chain length. The polypeptide is 3-hydroxydecanoyl-[acyl-carrier-protein] dehydratase (Vibrio parahaemolyticus serotype O3:K6 (strain RIMD 2210633)).